We begin with the raw amino-acid sequence, 875 residues long: Importin subunit beta-1 (875 aa).

Position 1 is an N-acetylmethionine (methionine 1). 5 HEAT repeats span residues 2–31 (ELIT…AAVE), 33–64 (LPTF…IRLL), 84–122 (ANAR…EIPV), 128–159 (LIPQ…ICQD), and 169–201 (SNEI…LNSL). Phosphoserine is present on serine 12. Residues 21–100 (AQKFLERAAV…KNYVLQTLGT (80 aa)) form the Importin N-terminal domain. The residue at position 210 (lysine 210) is an N6-acetyllysine. 14 HEAT repeats span residues 211-246 (ESER…IMSL), 252-301 (ETYM…EAAE), 313-359 (YAKG…TCCE), 363-393 (VPHV…GSIL), 401-437 (LKPL…ICEL), 448-484 (LAPL…YEAA), 499-536 (SSSF…EIVK), 543-591 (YPAV…QNVL), 599-638 (ALQI…VEVL), 643-680 (LKYM…CRAL), 685-723 (LPFC…TLAI), 731-775 (LEVV…VQGL), 785-828 (DVML…CTAF), and 830-872 (KDVL…RKLK). The essential for high affinity interaction with RPL23A stretch occupies residues 285-461 (VCDEEMDLAI…LQCLIEGLSA (177 aa)). The IAB-binding stretch occupies residues 328–341 (TLTKQDENDDDDDW). Residues 333–418 (DENDDDDDWN…MPTLIELMKD (86 aa)) are ran-GTP binding. An N6-acetyllysine mark is found at lysine 834 and lysine 866.

This sequence belongs to the importin beta family. Importin beta-1 subfamily. In terms of assembly, forms a complex with an importin alpha subunit. Interacts with XPO1. Forms a heterodimer with IPO7. The KPNB1/IPO7 heterodimer interacts with H1 histone. Interacts with SNUPN. Interacts with H2A, H2B, H3 and H4 histones. Component of an import snRNP complex composed of KPNB1, SNUPN, SMN1 and ZNF259. Component of a nuclear export receptor complex composed of KPNB1, Ran, SNUPN and XPO1. Interacts with SRY. Interacts with PRKCI/atypical protein kinase C iota. Interacts with KPNA2. Interacts with KPNA7. Interacts with SNAI1 (via zinc fingers) and SNAI2 (via zinc fingers). Interacts with SLC35G1 and STIM1. Interacts with DCAF8. Interacts with RAN. Interacts with NUMA1 (via C-terminus); this interaction is inhibited by RanGTP. Interacts with ZBED1/hDREF; required for nuclear import of ZBED1/hDREF. Interacts with SRP19. Interacts with RPL23A (via BIB domain), RPS7 and RPL5. In terms of processing, mono-ADP-ribosylated by PARP16.

Its subcellular location is the cytoplasm. The protein resides in the nucleus envelope. In terms of biological role, functions in nuclear protein import, either in association with an adapter protein, like an importin-alpha subunit, which binds to nuclear localization signals (NLS) in cargo substrates, or by acting as autonomous nuclear transport receptor. Acting autonomously, serves itself as NLS receptor. Docking of the importin/substrate complex to the nuclear pore complex (NPC) is mediated by KPNB1 through binding to nucleoporin FxFG repeats and the complex is subsequently translocated through the pore by an energy requiring, Ran-dependent mechanism. At the nucleoplasmic side of the NPC, Ran binds to importin-beta and the three components separate and importin-alpha and -beta are re-exported from the nucleus to the cytoplasm where GTP hydrolysis releases Ran from importin. The directionality of nuclear import is thought to be conferred by an asymmetric distribution of the GTP- and GDP-bound forms of Ran between the cytoplasm and nucleus. Mediates autonomously the nuclear import of ribosomal proteins RPL23A, RPS7 and RPL5. In association with IPO7, mediates the nuclear import of H1 histone. In vitro, mediates nuclear import of H2A, H2B, H3 and H4 histones. Imports MRTFA, SNAI1 and PRKCI into the nucleus. The protein is Importin subunit beta-1 (Kpnb1) of Rattus norvegicus (Rat).